Reading from the N-terminus, the 262-residue chain is S-methyl-5'-thioadenosine phosphorylase (262 aa).

Phosphate contacts are provided by residues Ser-12, 54–55, and 87–88; these read RH and SA. Residue Met-185 coordinates substrate. Residue Thr-186 coordinates phosphate. Substrate is bound at residue 209 to 211; sequence DYD.

It belongs to the PNP/MTAP phosphorylase family. MTAP subfamily. In terms of assembly, homohexamer. Dimer of a homotrimer.

It carries out the reaction S-methyl-5'-thioadenosine + phosphate = 5-(methylsulfanyl)-alpha-D-ribose 1-phosphate + adenine. The protein operates within amino-acid biosynthesis; L-methionine biosynthesis via salvage pathway; S-methyl-5-thio-alpha-D-ribose 1-phosphate from S-methyl-5'-thioadenosine (phosphorylase route): step 1/1. In terms of biological role, catalyzes the reversible phosphorylation of S-methyl-5'-thioadenosine (MTA) to adenine and 5-methylthioribose-1-phosphate. Involved in the breakdown of MTA, a major by-product of polyamine biosynthesis. Responsible for the first step in the methionine salvage pathway after MTA has been generated from S-adenosylmethionine. Has broad substrate specificity with 6-aminopurine nucleosides as preferred substrates. In Thermofilum pendens (strain DSM 2475 / Hrk 5), this protein is S-methyl-5'-thioadenosine phosphorylase.